Here is a 354-residue protein sequence, read N- to C-terminus: Bifunctional transcriptional activator/DNA repair enzyme Ada (354 aa).

The methylphosphotriester-DNA--protein-cysteine methyltransferase stretch occupies residues 1–171 (MKKATCLTDD…SSSYYRKADE (171 aa)). Position 34 (Thr34) interacts with DNA. The active-site Nucleophile; methyl group acceptor from methylphosphotriester is the Cys38. Residues Cys38 and Cys42 each coordinate Zn(2+). DNA-binding residues include Arg43, Arg45, and Arg67. Zn(2+) is bound by residues Cys69 and Cys72. An HTH araC/xylS-type domain is found at 85–183 (DKITHACRLL…GMTAKQFRHG (99 aa)). The segment at residues 102 to 121 (LEALADQVAMSPFHLHRLFK) is a DNA-binding region (H-T-H motif). A methylated-DNA--protein-cysteine methyltransferase region spans residues 181–354 (RHGGENLAVR…LRREAENEER (174 aa)). Cys321 serves as the catalytic Nucleophile; methyl group acceptor from either O6-methylguanine or O4-methylthymine.

This sequence in the C-terminal section; belongs to the MGMT family. Zn(2+) serves as cofactor.

The enzyme catalyses (2'-deoxyribonucleoside 5'-methylphosphotriester)-DNA + L-cysteinyl-[protein] = 2'-deoxyribonucleotide-DNA + S-methyl-L-cysteinyl-[protein] + H(+). It carries out the reaction a 6-O-methyl-2'-deoxyguanosine in DNA + L-cysteinyl-[protein] = S-methyl-L-cysteinyl-[protein] + a 2'-deoxyguanosine in DNA. The catalysed reaction is a 4-O-methyl-thymidine in DNA + L-cysteinyl-[protein] = a thymidine in DNA + S-methyl-L-cysteinyl-[protein]. Functionally, involved in the adaptive response to alkylation damage in DNA caused by alkylating agents. Repairs O6-methylguanine (O6-MeG) and O4-methylthymine (O4-MeT) in DNA. Repairs the methylated nucleobase in DNA by stoichiometrically transferring the methyl group to a cysteine residue in the enzyme (Cys-321). Also specifically repairs the Sp diastereomer of DNA methylphosphotriester lesions by the same mechanism, although the methyl transfer occurs onto a different cysteine residue (Cys-38). Cannot demethylate the other diastereomer, Rp-methylphosphotriester. This is a suicide reaction: the enzyme is irreversibly inactivated. The methylation of Ada by methylphosphotriesters in DNA leads to its activation as a transcriptional regulator that activates the transcription of its own gene, ada, and other alkylation resistance genes, alkA, alkB and aidB. This Escherichia coli (strain K12) protein is Bifunctional transcriptional activator/DNA repair enzyme Ada (ada).